A 331-amino-acid polypeptide reads, in one-letter code: Eukaryotic translation initiation factor 2 subunit 2 (331 aa).

Disordered regions lie at residues methionine 1 to phenylalanine 75 and alanine 97 to methionine 120. An N-acetylserine modification is found at serine 2. 2 positions are modified to phosphoserine: serine 2 and serine 13. Basic residues predominate over residues serine 13 to proline 22. Threonine 36 is subject to Phosphothreonine. Residues glutamate 40–glutamate 51 are compositionally biased toward basic and acidic residues. Serine 67 is subject to Phosphoserine. Lysine 102 participates in a covalent cross-link: Glycyl lysine isopeptide (Lys-Gly) (interchain with G-Cter in SUMO2). Residue serine 105 is modified to Phosphoserine. The segment covering aspartate 106–aspartate 118 has biased composition (acidic residues). 2 positions are modified to phosphoserine: serine 158 and serine 216. Lysine 263 and lysine 291 each carry N6-acetyllysine. The C4-type zinc finger occupies cysteine 279–cysteine 303.

It belongs to the eIF-2-beta/eIF-5 family. As to quaternary structure, eukaryotic translation initiation factor 2 eIF2 is a heterotrimeric complex composed of an alpha (EIF2S1), a beta (EIF2S2) and a gamma (EIF2S3) chain. eIF2 is member of the 43S pre-initiation complex (43S PIC). eIF2 forms a complex with at least CELF1/CUGBP1, CALR, CALR3, EIF2S1, EIF2S2, HSP90B1 and HSPA5. Interacts with BZW2/5MP1. Interacts with EIF5.

Its subcellular location is the cytoplasm. The protein resides in the cytosol. Functionally, component of the eIF2 complex that functions in the early steps of protein synthesis by forming a ternary complex with GTP and initiator tRNA. This complex binds to a 40S ribosomal subunit, followed by mRNA binding to form the 43S pre-initiation complex (43S PIC). Junction of the 60S ribosomal subunit to form the 80S initiation complex is preceded by hydrolysis of the GTP bound to eIF2 and release of an eIF2-GDP binary complex. In order for eIF2 to recycle and catalyze another round of initiation, the GDP bound to eIF2 must exchange with GTP by way of a reaction catalyzed by eIF2B. The sequence is that of Eukaryotic translation initiation factor 2 subunit 2 (Eif2s2) from Mus musculus (Mouse).